Reading from the N-terminus, the 117-residue chain is Large ribosomal subunit protein bL19 (117 aa).

The protein belongs to the bacterial ribosomal protein bL19 family.

This protein is located at the 30S-50S ribosomal subunit interface and may play a role in the structure and function of the aminoacyl-tRNA binding site. The sequence is that of Large ribosomal subunit protein bL19 from Cutibacterium acnes (strain DSM 16379 / KPA171202) (Propionibacterium acnes).